The chain runs to 135 residues: C-type lectin APL (135 aa).

Intrachain disulfides connect C3-C14, C31-C131, C38-C133, and C106-C123. Residues 10-132 (MNGLCYKIFD…CESKNAFLCQ (123 aa)) form the C-type lectin domain. 5 residues coordinate Ca(2+): Q96, D98, E104, N119, and D120. The Galactose-binding signature appears at 96 to 98 (QPD).

It belongs to the true venom lectin family. In terms of assembly, homodimer; disulfide-linked. In terms of tissue distribution, expressed by the venom gland.

It is found in the secreted. Functionally, beta-galactoside lectin that agglutinates rabbit and human erythrocytes in a calcium-dependent fashion (MHC is 0.21 ug/ml on rabbit erythrocytes). Galactose (15 mM), lactose (20 mM), rhamnose (20 mM) and EGTA strongly inhibit this activity. This chain is C-type lectin APL, found in Agkistrodon piscivorus piscivorus (Eastern cottonmouth).